We begin with the raw amino-acid sequence, 180 residues long: ATP synthase subunit delta (180 aa).

The protein belongs to the ATPase delta chain family. F-type ATPases have 2 components, F(1) - the catalytic core - and F(0) - the membrane proton channel. F(1) has five subunits: alpha(3), beta(3), gamma(1), delta(1), epsilon(1). F(0) has three main subunits: a(1), b(2) and c(10-14). The alpha and beta chains form an alternating ring which encloses part of the gamma chain. F(1) is attached to F(0) by a central stalk formed by the gamma and epsilon chains, while a peripheral stalk is formed by the delta and b chains.

The protein resides in the cell inner membrane. F(1)F(0) ATP synthase produces ATP from ADP in the presence of a proton or sodium gradient. F-type ATPases consist of two structural domains, F(1) containing the extramembraneous catalytic core and F(0) containing the membrane proton channel, linked together by a central stalk and a peripheral stalk. During catalysis, ATP synthesis in the catalytic domain of F(1) is coupled via a rotary mechanism of the central stalk subunits to proton translocation. In terms of biological role, this protein is part of the stalk that links CF(0) to CF(1). It either transmits conformational changes from CF(0) to CF(1) or is implicated in proton conduction. In Geobacter sp. (strain M21), this protein is ATP synthase subunit delta.